The following is a 179-amino-acid chain: Large ribosomal subunit protein uL5 (179 aa).

Lys-3 is modified (N6-acetyllysine).

It belongs to the universal ribosomal protein uL5 family. Part of the 50S ribosomal subunit; part of the 5S rRNA/L5/L18/L25 subcomplex. Contacts the 5S rRNA and the P site tRNA. Forms a bridge to the 30S subunit in the 70S ribosome.

Its function is as follows. This is one of the proteins that bind and probably mediate the attachment of the 5S RNA into the large ribosomal subunit, where it forms part of the central protuberance. In the 70S ribosome it contacts protein S13 of the 30S subunit (bridge B1b), connecting the 2 subunits; this bridge is implicated in subunit movement. Contacts the P site tRNA; the 5S rRNA and some of its associated proteins might help stabilize positioning of ribosome-bound tRNAs. This Shigella flexneri protein is Large ribosomal subunit protein uL5.